The primary structure comprises 492 residues: Putative cytochrome P450 136 (492 aa).

C439 provides a ligand contact to heme.

Belongs to the cytochrome P450 family. Heme is required as a cofactor.

In Mycobacterium tuberculosis (strain CDC 1551 / Oshkosh), this protein is Putative cytochrome P450 136 (cyp136).